A 436-amino-acid chain; its full sequence is Glutamate-1-semialdehyde 2,1-aminomutase 2 (436 aa).

Lys271 is subject to N6-(pyridoxal phosphate)lysine.

This sequence belongs to the class-III pyridoxal-phosphate-dependent aminotransferase family. HemL subfamily. In terms of assembly, homodimer. Pyridoxal 5'-phosphate is required as a cofactor.

The protein localises to the cytoplasm. The enzyme catalyses (S)-4-amino-5-oxopentanoate = 5-aminolevulinate. It participates in porphyrin-containing compound metabolism; protoporphyrin-IX biosynthesis; 5-aminolevulinate from L-glutamyl-tRNA(Glu): step 2/2. The chain is Glutamate-1-semialdehyde 2,1-aminomutase 2 from Exiguobacterium sibiricum (strain DSM 17290 / CCUG 55495 / CIP 109462 / JCM 13490 / 255-15).